The sequence spans 144 residues: Large ribosomal subunit protein uL13 (144 aa).

It belongs to the universal ribosomal protein uL13 family. In terms of assembly, part of the 50S ribosomal subunit.

Its function is as follows. This protein is one of the early assembly proteins of the 50S ribosomal subunit, although it is not seen to bind rRNA by itself. It is important during the early stages of 50S assembly. The polypeptide is Large ribosomal subunit protein uL13 (Moorella thermoacetica (strain ATCC 39073 / JCM 9320)).